Here is a 102-residue protein sequence, read N- to C-terminus: Large ribosomal subunit protein mL63 (102 aa).

The protein belongs to the mitochondrion-specific ribosomal protein mL63 family. As to quaternary structure, component of the mitochondrial large ribosomal subunit (mt-LSU). Mature mammalian 55S mitochondrial ribosomes consist of a small (28S) and a large (39S) subunit. The 28S small subunit contains a 12S ribosomal RNA (12S mt-rRNA) and 30 different proteins. The 39S large subunit contains a 16S rRNA (16S mt-rRNA), a copy of mitochondrial valine transfer RNA (mt-tRNA(Val)), which plays an integral structural role, and 52 different proteins.

It localises to the mitochondrion. The polypeptide is Large ribosomal subunit protein mL63 (MRPL57) (Homo sapiens (Human)).